Here is a 60-residue protein sequence, read N- to C-terminus: Large ribosomal subunit protein bL32 (60 aa).

The interval 1–60 (MAVQQNKKTPSKRGMHRSHDFLVAPQLSVEPTTGETHMRHHISPNGFYRGRKVLKTKNDE) is disordered. The span at 49-60 (RGRKVLKTKNDE) shows a compositional bias: basic residues.

It belongs to the bacterial ribosomal protein bL32 family.

This is Large ribosomal subunit protein bL32 from Janthinobacterium sp. (strain Marseille) (Minibacterium massiliensis).